Reading from the N-terminus, the 434-residue chain is Sodium/bile acid cotransporter 5 (434 aa).

Residues 1-18 (MSGNFFIFLLLLVTPGEA) form the signal peptide. Over 19 to 129 (KKSFLSFLNI…VRVFRQTDDS (111 aa)) the chain is Extracellular. Residues Asn-73 and Asn-96 are each glycosylated (N-linked (GlcNAc...) asparagine). The chain crosses the membrane as a helical span at residues 130-150 (LLQAPIHVDSSIFLLVLSMIL). Topologically, residues 151–172 (LNKCAFGCKIEFQVLQTVWKRP) are cytoplasmic. A helical membrane pass occupies residues 173-193 (LPILLGVVIQFFLMPFCGFLL). Over 194–203 (SQILGLPKAQ) the chain is Extracellular. A helical transmembrane segment spans residues 204–226 (AFGFVMTCTCPGGGGGYLFALLL). The Cytoplasmic segment spans residues 227-232 (EGDVTL). Residues 233–255 (AILMTCTSTSLALIMMPVNSYFY) traverse the membrane as a helical segment. Residues 256-268 (SRLLGLAGAFHVP) are Extracellular-facing. A helical membrane pass occupies residues 269–289 (VLKIVSTLLFILMPMSTGVII). At 290–306 (KHKMPAKAICLERVVRP) the chain is on the cytoplasmic side. The helical transmembrane segment at 307-327 (LSLTLMFVGIYLAFRMGLVFL) threads the bilayer. Residues 328–331 (RMAN) lie on the Extracellular side of the membrane. A helical membrane pass occupies residues 332–352 (LEVFLLGLLVPALGLLFGYSL). Residues 353–365 (AKVYLLPLPVCKT) lie on the Cytoplasmic side of the membrane. The helical transmembrane segment at 366–386 (VALETGMLNSFLALAIIQLSF) threads the bilayer. Residues 387–395 (SQPKAHEAS) lie on the Extracellular side of the membrane. Residues 396 to 416 (VAPFTVAMCSSCEMLLLLLVY) form a helical membrane-spanning segment. Residues 417-434 (KAKRRPSLSTEYEKTPLV) lie on the Cytoplasmic side of the membrane.

Belongs to the bile acid:sodium symporter (BASS) (TC 2.A.28) family.

It localises to the membrane. The polypeptide is Sodium/bile acid cotransporter 5 (Slc10a5) (Mus musculus (Mouse)).